We begin with the raw amino-acid sequence, 328 residues long: Nitrilase (328 aa).

In terms of domain architecture, CN hydrolase spans 9 to 286 (VRVAAIQAEP…EGILYANVDV (278 aa)). Catalysis depends on Glu-49, which acts as the Proton acceptor. Lys-131 is an active-site residue. Cys-166 functions as the Nucleophile in the catalytic mechanism.

It belongs to the carbon-nitrogen hydrolase superfamily. Nitrilase family.

The catalysed reaction is a nitrile + 2 H2O = a carboxylate + NH4(+). Functionally, nitrilase that hydrolyzes preferentially 4-cyanopyridine. Is also able to hydrolyze some aliphatic nitriles, such as (R,S)-mandelonitrile. The chain is Nitrilase from Penicillium rubens (strain ATCC 28089 / DSM 1075 / NRRL 1951 / Wisconsin 54-1255) (Penicillium chrysogenum).